We begin with the raw amino-acid sequence, 556 residues long: Glutamine--tRNA ligase (556 aa).

The short motif at 35–45 (PEPNGYLHIGH) is the 'HIGH' region element. Residues 36 to 38 (EPN) and 42 to 48 (HIGHAKS) each bind ATP. L-glutamine contacts are provided by Asp68 and Tyr213. ATP-binding positions include Thr232 and 262-263 (RL). The 'KMSKS' region signature appears at 269 to 273 (VTSKR).

The protein belongs to the class-I aminoacyl-tRNA synthetase family. Monomer.

The protein resides in the cytoplasm. The enzyme catalyses tRNA(Gln) + L-glutamine + ATP = L-glutaminyl-tRNA(Gln) + AMP + diphosphate. The chain is Glutamine--tRNA ligase from Pseudomonas aeruginosa (strain LESB58).